Here is a 398-residue protein sequence, read N- to C-terminus: S-adenosylmethionine synthase (398 aa).

H17 provides a ligand contact to ATP. Residue D19 coordinates Mg(2+). E45 contributes to the K(+) binding site. 2 residues coordinate L-methionine: E58 and Q101. The interval 101 to 111 (QSPDIAQGVDK) is flexible loop. ATP is bound by residues 176-178 (DGK), 243-244 (RF), D252, 258-259 (RK), and K279. D252 provides a ligand contact to L-methionine. K283 contributes to the L-methionine binding site.

Belongs to the AdoMet synthase family. Homotetramer; dimer of dimers. Requires Mg(2+) as cofactor. K(+) is required as a cofactor.

The protein resides in the cytoplasm. The enzyme catalyses L-methionine + ATP + H2O = S-adenosyl-L-methionine + phosphate + diphosphate. Its pathway is amino-acid biosynthesis; S-adenosyl-L-methionine biosynthesis; S-adenosyl-L-methionine from L-methionine: step 1/1. In terms of biological role, catalyzes the formation of S-adenosylmethionine (AdoMet) from methionine and ATP. The overall synthetic reaction is composed of two sequential steps, AdoMet formation and the subsequent tripolyphosphate hydrolysis which occurs prior to release of AdoMet from the enzyme. This chain is S-adenosylmethionine synthase, found in Staphylococcus haemolyticus (strain JCSC1435).